Here is a 52-residue protein sequence, read N- to C-terminus: Rubredoxin (52 aa).

Residues 1–51 (MDKYECSICGYIYDEAEGDDGNVAAGTKFADLPADWVCPTCGADKDAFVKM) enclose the Rubredoxin-like domain. Fe cation-binding residues include cysteine 6, cysteine 9, cysteine 38, and cysteine 41.

The protein belongs to the rubredoxin family. Fe(3+) serves as cofactor.

In terms of biological role, rubredoxin is a small nonheme, iron protein lacking acid-labile sulfide. Its single Fe, chelated to 4 Cys, functions as an electron acceptor and may also stabilize the conformation of the molecule. The sequence is that of Rubredoxin from Megasphaera elsdenii.